Consider the following 554-residue polypeptide: (Z)-gamma-bisabolene synthase 2 (554 aa).

Mg(2+)-binding residues include D306, D310, D450, and D458. The short motif at 306 to 310 (DDACD) is the DDXXD motif element.

It belongs to the terpene synthase family. Tpsa subfamily. The cofactor is Mg(2+). Mn(2+) is required as a cofactor. Predominantly expressed in roots. Expressed in the cortex and the sub-epidermal layers of roots. Also detected in leaf hydathodes and flower stigmata.

It is found in the cytoplasm. It catalyses the reaction (2E,6E)-farnesyl diphosphate = (Z)-gamma-bisabolene + diphosphate. It participates in secondary metabolite biosynthesis; terpenoid biosynthesis. Involved in sesquiterpene (C15) biosynthesis. The major product is (Z)-gamma-bisabolene with minor amounts of (E)-nerolidol and alpha-bisabolol. The sequence is that of (Z)-gamma-bisabolene synthase 2 (TPS13) from Arabidopsis thaliana (Mouse-ear cress).